The chain runs to 201 residues: Coiled-coil domain-containing protein 195 (201 aa).

Residues D4–R38 adopt a coiled-coil conformation. 2 disordered regions span residues L28–P72 and S179–E201. Low complexity predominate over residues S179 to S188. A compositionally biased stretch (polar residues) spans P189 to E201.

This Homo sapiens (Human) protein is Coiled-coil domain-containing protein 195.